The sequence spans 345 residues: Phosphoribosylformylglycinamidine cyclo-ligase (345 aa).

The protein belongs to the AIR synthase family.

It is found in the cytoplasm. The enzyme catalyses 2-formamido-N(1)-(5-O-phospho-beta-D-ribosyl)acetamidine + ATP = 5-amino-1-(5-phospho-beta-D-ribosyl)imidazole + ADP + phosphate + H(+). It functions in the pathway purine metabolism; IMP biosynthesis via de novo pathway; 5-amino-1-(5-phospho-D-ribosyl)imidazole from N(2)-formyl-N(1)-(5-phospho-D-ribosyl)glycinamide: step 2/2. In Shouchella clausii (strain KSM-K16) (Alkalihalobacillus clausii), this protein is Phosphoribosylformylglycinamidine cyclo-ligase.